The primary structure comprises 340 residues: Methionine import ATP-binding protein MetN (340 aa).

Residues 2–241 (IRIENLTKIY…PQSSVAKEFI (240 aa)) enclose the ABC transporter domain. Position 38-45 (38-45 (GLSGAGKS)) interacts with ATP.

The protein belongs to the ABC transporter superfamily. Methionine importer (TC 3.A.1.24) family. The complex is composed of two ATP-binding proteins (MetN), two transmembrane proteins (MetI) and a solute-binding protein (MetQ).

The protein localises to the cell membrane. The catalysed reaction is L-methionine(out) + ATP + H2O = L-methionine(in) + ADP + phosphate + H(+). It carries out the reaction D-methionine(out) + ATP + H2O = D-methionine(in) + ADP + phosphate + H(+). Its function is as follows. Part of the ABC transporter complex MetNIQ involved in methionine import. Responsible for energy coupling to the transport system. This Desulfitobacterium hafniense (strain Y51) protein is Methionine import ATP-binding protein MetN.